A 254-amino-acid polypeptide reads, in one-letter code: MSKIRILVGVKRTLDYMLKPRINATKTAVDLSGQKMSINPFCDIAVEEAIRMKETLKNRIEDTLVVTAGQTSSEPILRQCLAKGIGRAALINVGEKELEPLSVAKLLKATVEKEKSNLVLLGKQAIDDDAHQTGGMLAAMLGWPQFTSASKVRIEGDKVIVTREIDGGEETLSSTLPAIITTDLRLNVPRFANLAKVMKARKAPLGKMSPEDLGVTIDQRLQTVSVSEPVQKRQNIMVKSVDEMVKTLKELGAL.

Belongs to the ETF beta-subunit/FixA family. In terms of assembly, heterodimer of an alpha and a beta subunit. Requires FAD as cofactor. The cofactor is AMP.

The protein localises to the mitochondrion matrix. The electron transfer flavoprotein serves as a specific electron acceptor for several dehydrogenases, including five acyl-CoA dehydrogenases, glutaryl-CoA and sarcosine dehydrogenase. It transfers the electrons to the main mitochondrial respiratory chain via ETF-ubiquinone oxidoreductase (ETF dehydrogenase). This is Probable electron transfer flavoprotein subunit beta from Schizosaccharomyces pombe (strain 972 / ATCC 24843) (Fission yeast).